The following is a 78-amino-acid chain: NAD(P)H-quinone oxidoreductase subunit O (78 aa).

Belongs to the complex I NdhO subunit family. NDH-1 can be composed of about 15 different subunits; different subcomplexes with different compositions have been identified which probably have different functions.

The protein localises to the cellular thylakoid membrane. The catalysed reaction is a plastoquinone + NADH + (n+1) H(+)(in) = a plastoquinol + NAD(+) + n H(+)(out). It carries out the reaction a plastoquinone + NADPH + (n+1) H(+)(in) = a plastoquinol + NADP(+) + n H(+)(out). Functionally, NDH-1 shuttles electrons from an unknown electron donor, via FMN and iron-sulfur (Fe-S) centers, to quinones in the respiratory and/or the photosynthetic chain. The immediate electron acceptor for the enzyme in this species is believed to be plastoquinone. Couples the redox reaction to proton translocation, and thus conserves the redox energy in a proton gradient. Cyanobacterial NDH-1 also plays a role in inorganic carbon-concentration. The polypeptide is NAD(P)H-quinone oxidoreductase subunit O (Prochlorococcus marinus (strain MIT 9215)).